Here is a 150-residue protein sequence, read N- to C-terminus: Large ribosomal subunit protein uL15 (150 aa).

The disordered stretch occupies residues 1 to 52 (MITLNTLKDSTRKRKPRKRVGRGIGSKHGKTCGRGEKGAGARSGYKRRLGKE). Residues 11 to 31 (TRKRKPRKRVGRGIGSKHGKT) show a composition bias toward basic residues.

It belongs to the universal ribosomal protein uL15 family. Part of the 50S ribosomal subunit.

In terms of biological role, binds to the 23S rRNA. This Protochlamydia amoebophila (strain UWE25) protein is Large ribosomal subunit protein uL15.